Here is a 290-residue protein sequence, read N- to C-terminus: UPF0046 protein K07C11.7 (290 aa).

A signal peptide spans 1–22 (MFHFSIGTVLISICWLAQWMEA). N-linked (GlcNAc...) asparagine glycosylation occurs at Asn-204.

The protein belongs to the UPF0046 family.

The chain is UPF0046 protein K07C11.7 from Caenorhabditis elegans.